Consider the following 279-residue polypeptide: Type III pantothenate kinase (279 aa).

6-13 (DIGNTLSK) contacts ATP. Substrate is bound by residues Tyr-92 and 99–102 (GVDR). Asp-101 (proton acceptor) is an active-site residue. Asp-120 lines the K(+) pocket. Ser-123 provides a ligand contact to ATP. Substrate is bound at residue Thr-177.

It belongs to the type III pantothenate kinase family. In terms of assembly, homodimer. It depends on NH4(+) as a cofactor. The cofactor is K(+).

It is found in the cytoplasm. The catalysed reaction is (R)-pantothenate + ATP = (R)-4'-phosphopantothenate + ADP + H(+). Its pathway is cofactor biosynthesis; coenzyme A biosynthesis; CoA from (R)-pantothenate: step 1/5. Its function is as follows. Catalyzes the phosphorylation of pantothenate (Pan), the first step in CoA biosynthesis. This Chromohalobacter salexigens (strain ATCC BAA-138 / DSM 3043 / CIP 106854 / NCIMB 13768 / 1H11) protein is Type III pantothenate kinase.